The sequence spans 451 residues: uncharacterized protein (451 aa).

The TRAM domain occupies N2–K60. [4Fe-4S] cluster-binding residues include C73, C79, C82, and C162. S-adenosyl-L-methionine-binding residues include Q283, Y312, D333, and D381. The active-site Nucleophile is C408.

It belongs to the class I-like SAM-binding methyltransferase superfamily. RNA M5U methyltransferase family.

This is an uncharacterized protein from Streptococcus agalactiae serotype III (strain NEM316).